Reading from the N-terminus, the 361-residue chain is Peptide chain release factor 1 (361 aa).

Residue Gln-235 is modified to N5-methylglutamine.

The protein belongs to the prokaryotic/mitochondrial release factor family. In terms of processing, methylated by PrmC. Methylation increases the termination efficiency of RF1.

It is found in the cytoplasm. Peptide chain release factor 1 directs the termination of translation in response to the peptide chain termination codons UAG and UAA. The chain is Peptide chain release factor 1 from Azoarcus sp. (strain BH72).